Reading from the N-terminus, the 288-residue chain is Protease HtpX homolog (288 aa).

A run of 2 helical transmembrane segments spans residues 6–26 and 28–48; these read TAFL…YVGG and QGMM…YFFS. H130 is a binding site for Zn(2+). E131 is an active-site residue. H134 lines the Zn(2+) pocket. 2 consecutive transmembrane segments (helical) span residues 140–160 and 179–199; these read ILTG…ANFA and VIML…QMAI. E204 is a Zn(2+) binding site.

The protein belongs to the peptidase M48B family. Zn(2+) is required as a cofactor.

It localises to the cell inner membrane. The polypeptide is Protease HtpX homolog (Campylobacter concisus (strain 13826)).